The sequence spans 1260 residues: Kinesin-like protein KIN-14E (1260 aa).

The MyTH4 domain maps to 115–274 (FQKDPIPTSL…PGREEIEALL (160 aa)). Residues 279–593 (LTTIVFFLDE…HINDVMLRRY (315 aa)) enclose the FERM domain. 2 coiled-coil regions span residues 615–676 (QNFE…LLEV) and 753–853 (SKRL…TAAI). Residues 888 to 1209 (KIRVYCRIRP…LLYASRVRTI (322 aa)) form the Kinesin motor domain. 972–977 (GSGKTF) lines the ATP pocket. Residues 1217-1239 (ISSKEMVRLKKLVAYWKEQAGKK) are calmodulin-binding. Residues 1221-1260 (EMVRLKKLVAYWKEQAGKKGEEEDLVDIEEDRTRKDEADS) are homodimerization domain. A disordered region spans residues 1236–1260 (AGKKGEEEDLVDIEEDRTRKDEADS). Basic and acidic residues predominate over residues 1251–1260 (DRTRKDEADS).

It belongs to the TRAFAC class myosin-kinesin ATPase superfamily. Kinesin family. KIN-14 subfamily. Homodimer (via C-terminus). Binds microtubules via its N-terminus containing the MyTH4 domain and binds F-actin via its FERM domain. Interacts with KIPK1. Interacts with KIPK2. Interacts with AN. Interacts with AIR9. Interacts (via C-terminus) with KIC, CAM2, CAM4 and CAM6. KIC and calmodulin show competitive binding to KCBP. Binding to calmodulin inhibits microtubule binding activity. Binding to KIC inhibits microtubule binding activity and microtubule-stimulated ATPase activity. As to expression, widely expressed with the highest levels in flowers. Strongly expressed in the root tip. Highly detected in the branch apex of the trichome.

The protein resides in the cytoplasm. The protein localises to the cell cortex. It is found in the cytoskeleton. Its subcellular location is the spindle. It localises to the phragmoplast. In terms of biological role, minus-end microtubule-dependent motor protein involved in the regulation of cell division and trichome morphogenesis through microtubules bundling. Possesses basal and microtubule-stimulated ATPase activities. Acts as a hub that brings together microtubules and actin filaments to modulate the cytoskeleton during trichome formation and morphogenesis. Could be involved in the negative regulation of root growth. The protein is Kinesin-like protein KIN-14E of Arabidopsis thaliana (Mouse-ear cress).